Here is a 420-residue protein sequence, read N- to C-terminus: Tyrosine--tRNA ligase (420 aa).

Tyr36 serves as a coordination point for L-tyrosine. The 'HIGH' region signature appears at 41 to 50 (PTADSMHIGH). Tyr170 and Gln174 together coordinate L-tyrosine. The 'KMSKS' region motif lies at 231–235 (KFGKS). Lys234 lines the ATP pocket. An S4 RNA-binding domain is found at 353–420 (TNIVDFIVEA…KKKYFMVKYK (68 aa)).

It belongs to the class-I aminoacyl-tRNA synthetase family. TyrS type 1 subfamily. In terms of assembly, homodimer.

It localises to the cytoplasm. The catalysed reaction is tRNA(Tyr) + L-tyrosine + ATP = L-tyrosyl-tRNA(Tyr) + AMP + diphosphate + H(+). In terms of biological role, catalyzes the attachment of tyrosine to tRNA(Tyr) in a two-step reaction: tyrosine is first activated by ATP to form Tyr-AMP and then transferred to the acceptor end of tRNA(Tyr). In Staphylococcus carnosus (strain TM300), this protein is Tyrosine--tRNA ligase.